We begin with the raw amino-acid sequence, 116 residues long: Large ribosomal subunit protein bL20 (116 aa).

The protein belongs to the bacterial ribosomal protein bL20 family.

Functionally, binds directly to 23S ribosomal RNA and is necessary for the in vitro assembly process of the 50S ribosomal subunit. It is not involved in the protein synthesizing functions of that subunit. This is Large ribosomal subunit protein bL20 from Bacteroides fragilis (strain ATCC 25285 / DSM 2151 / CCUG 4856 / JCM 11019 / LMG 10263 / NCTC 9343 / Onslow / VPI 2553 / EN-2).